A 358-amino-acid chain; its full sequence is Peptide chain release factor 1 (358 aa).

Residue Gln237 is modified to N5-methylglutamine.

This sequence belongs to the prokaryotic/mitochondrial release factor family. In terms of processing, methylated by PrmC. Methylation increases the termination efficiency of RF1.

Its subcellular location is the cytoplasm. Peptide chain release factor 1 directs the termination of translation in response to the peptide chain termination codons UAG and UAA. This Streptomyces griseus subsp. griseus (strain JCM 4626 / CBS 651.72 / NBRC 13350 / KCC S-0626 / ISP 5235) protein is Peptide chain release factor 1.